The sequence spans 313 residues: tRNA dimethylallyltransferase (313 aa).

17 to 24 (GPTASGKT) contacts ATP. 19–24 (TASGKT) is a substrate binding site. Interaction with substrate tRNA regions lie at residues 42-45 (DSAL), 166-170 (QRLSR), 247-252 (RCVGYR), and 280-287 (KRQITWLR).

The protein belongs to the IPP transferase family. Monomer. Mg(2+) is required as a cofactor.

The enzyme catalyses adenosine(37) in tRNA + dimethylallyl diphosphate = N(6)-dimethylallyladenosine(37) in tRNA + diphosphate. Functionally, catalyzes the transfer of a dimethylallyl group onto the adenine at position 37 in tRNAs that read codons beginning with uridine, leading to the formation of N6-(dimethylallyl)adenosine (i(6)A). The protein is tRNA dimethylallyltransferase of Proteus mirabilis (strain HI4320).